The following is a 313-amino-acid chain: L-lactate dehydrogenase 1 (313 aa).

NAD(+)-binding positions include Val15, Asp36, Lys41, Tyr66, and 80 to 81 (GA). Positions 83 and 89 each coordinate substrate. NAD(+) contacts are provided by residues Ser102, 119–121 (VSN), and Ser144. A substrate-binding site is contributed by 121–124 (NPVD). Position 149–152 (149–152 (DTSR)) interacts with substrate. Positions 154 and 169 each coordinate beta-D-fructose 1,6-bisphosphate. His176 (proton acceptor) is an active-site residue. Tyr222 bears the Phosphotyrosine mark. Residue Thr231 participates in substrate binding.

Belongs to the LDH/MDH superfamily. LDH family. As to quaternary structure, homotetramer.

Its subcellular location is the cytoplasm. It carries out the reaction (S)-lactate + NAD(+) = pyruvate + NADH + H(+). It functions in the pathway fermentation; pyruvate fermentation to lactate; (S)-lactate from pyruvate: step 1/1. Allosterically activated by fructose 1,6-bisphosphate (FBP). Its function is as follows. Catalyzes the conversion of lactate to pyruvate. This chain is L-lactate dehydrogenase 1, found in Clostridium acetobutylicum (strain ATCC 824 / DSM 792 / JCM 1419 / IAM 19013 / LMG 5710 / NBRC 13948 / NRRL B-527 / VKM B-1787 / 2291 / W).